The chain runs to 609 residues: Cationic amino acid transporter 3, mitochondrial (609 aa).

Residues 1-14 constitute a mitochondrion transit peptide; the sequence is MGCLRSLVRRKQFD. Transmembrane regions (helical) follow at residues 38-58, 66-86, 104-124, 161-181, 190-210, 226-246, 270-290, 314-334, 361-381, 388-408, 474-494, 499-519, 534-554, and 558-578; these read LIAI…VGTV, ALAL…FCYA, ICIG…EYTI, IVVD…CCLG, GIVT…GSYL, FPYG…AYIG, ISLL…VGLV, AYLI…GSIL, QVPI…AFFM, GMVS…LLIV, IMFT…FLLP, YSLC…LICI, FICP…MYLL, and GAAT…VYIF.

Belongs to the amino acid-polyamine-organocation (APC) superfamily. Cationic amino acid transporter (CAT) (TC 2.A.3.3) family. As to expression, expressed in roots, stems, flowers, and leaves.

The protein localises to the mitochondrion membrane. Permease involved in the transport of the cationic neutral or acidic amino acids. The polypeptide is Cationic amino acid transporter 3, mitochondrial (CAT3) (Arabidopsis thaliana (Mouse-ear cress)).